The sequence spans 244 residues: Leucyl/phenylalanyl-tRNA--protein transferase (244 aa).

It belongs to the L/F-transferase family.

The protein localises to the cytoplasm. It catalyses the reaction N-terminal L-lysyl-[protein] + L-leucyl-tRNA(Leu) = N-terminal L-leucyl-L-lysyl-[protein] + tRNA(Leu) + H(+). It carries out the reaction N-terminal L-arginyl-[protein] + L-leucyl-tRNA(Leu) = N-terminal L-leucyl-L-arginyl-[protein] + tRNA(Leu) + H(+). The catalysed reaction is L-phenylalanyl-tRNA(Phe) + an N-terminal L-alpha-aminoacyl-[protein] = an N-terminal L-phenylalanyl-L-alpha-aminoacyl-[protein] + tRNA(Phe). Its function is as follows. Functions in the N-end rule pathway of protein degradation where it conjugates Leu, Phe and, less efficiently, Met from aminoacyl-tRNAs to the N-termini of proteins containing an N-terminal arginine or lysine. The chain is Leucyl/phenylalanyl-tRNA--protein transferase from Thermodesulfovibrio yellowstonii (strain ATCC 51303 / DSM 11347 / YP87).